Reading from the N-terminus, the 160-residue chain is 6,7-dimethyl-8-ribityllumazine synthase (160 aa).

Residues Trp27, 59-61, and 81-83 each bind 5-amino-6-(D-ribitylamino)uracil; these read AIE and VVI. 86–87 lines the (2S)-2-hydroxy-3-oxobutyl phosphate pocket; it reads DT. His89 functions as the Proton donor in the catalytic mechanism. 5-amino-6-(D-ribitylamino)uracil is bound at residue Asn114. A (2S)-2-hydroxy-3-oxobutyl phosphate-binding site is contributed by Arg128.

The protein belongs to the DMRL synthase family. As to quaternary structure, homopentamer.

It catalyses the reaction (2S)-2-hydroxy-3-oxobutyl phosphate + 5-amino-6-(D-ribitylamino)uracil = 6,7-dimethyl-8-(1-D-ribityl)lumazine + phosphate + 2 H2O + H(+). It participates in cofactor biosynthesis; riboflavin biosynthesis; riboflavin from 2-hydroxy-3-oxobutyl phosphate and 5-amino-6-(D-ribitylamino)uracil: step 1/2. In terms of biological role, catalyzes the formation of 6,7-dimethyl-8-ribityllumazine by condensation of 5-amino-6-(D-ribitylamino)uracil with 3,4-dihydroxy-2-butanone 4-phosphate. This is the penultimate step in the biosynthesis of riboflavin. The chain is 6,7-dimethyl-8-ribityllumazine synthase from Mycobacterium leprae (strain Br4923).